The primary structure comprises 393 residues: Protein TsgA (393 aa).

Helical transmembrane passes span 11 to 31, 51 to 71, 78 to 98, 101 to 121, 134 to 154, 162 to 182, 206 to 226, 245 to 265, 273 to 293, 298 to 318, 332 to 352, and 361 to 381; these read WISF…GMVM, FLNA…EIVP, FGFI…SLAL, AAMF…TFLI, LLFT…VAAF, WYWV…LTFG, IGVL…LGFI, ALVS…SFIL, ILTV…TGTQ, WFIL…ITLG, FILT…GPIV, and LLTA…LGFV.

It belongs to the major facilitator superfamily. TsgA family.

The protein localises to the cell inner membrane. This is Protein TsgA from Salmonella heidelberg (strain SL476).